Reading from the N-terminus, the 90-residue chain is Probable Fe(2+)-trafficking protein (90 aa).

It belongs to the Fe(2+)-trafficking protein family.

In terms of biological role, could be a mediator in iron transactions between iron acquisition and iron-requiring processes, such as synthesis and/or repair of Fe-S clusters in biosynthetic enzymes. The polypeptide is Probable Fe(2+)-trafficking protein (Paraburkholderia xenovorans (strain LB400)).